We begin with the raw amino-acid sequence, 232 residues long: Probable intron-encoded endonuclease aI3 (232 aa).

It belongs to the LAGLIDADG endonuclease family.

The protein localises to the mitochondrion. Mitochondrial DNA endonuclease involved in intron homing. The chain is Probable intron-encoded endonuclease aI3 (aI3) from Dictyostelium discoideum (Social amoeba).